The following is a 188-amino-acid chain: Elongation factor P (188 aa).

It belongs to the elongation factor P family.

The protein localises to the cytoplasm. Its pathway is protein biosynthesis; polypeptide chain elongation. In terms of biological role, involved in peptide bond synthesis. Stimulates efficient translation and peptide-bond synthesis on native or reconstituted 70S ribosomes in vitro. Probably functions indirectly by altering the affinity of the ribosome for aminoacyl-tRNA, thus increasing their reactivity as acceptors for peptidyl transferase. The sequence is that of Elongation factor P from Rhodopseudomonas palustris (strain HaA2).